A 66-amino-acid polypeptide reads, in one-letter code: Large ribosomal subunit protein bL33c (66 aa).

Belongs to the bacterial ribosomal protein bL33 family.

It is found in the plastid. The protein resides in the chloroplast. The polypeptide is Large ribosomal subunit protein bL33c (Cucumis sativus (Cucumber)).